The following is a 295-amino-acid chain: MNSKCETIKPQVVNSILDYWNLLKPKIMYLVVLTGITGMIIAPGSIHPFIAIISTLCIALGSGAAGAINMWYDSDIDALMTRTKNRPIPAGKISKSSAIELGLVLSVISVTVMMISVNYISGILLAISIGFYSFAYTMYLKRRTPQNIVIGGIAGAIPPIIGWTSVTSSISIESLILFLIIFMWTPPHFWALSLLNYQEYEKAKIPMLPVTHGIFVTKVHILVYSIVLFIITLLPGLFLKDYLLYEICAIPLGITFLFHAFKVFTSSNYYKYKAMFTYSVAYLFILFICIILASF.

9 helical membrane-spanning segments follow: residues 27 to 46, 50 to 72, 93 to 115, 119 to 136, 148 to 168, 175 to 195, 219 to 239, 244 to 264, and 275 to 295; these read IMYL…PGSI, IAII…NMWY, ISKS…VMMI, YISG…SFAY, IVIG…SVTS, LILF…LSLL, VHIL…GLFL, LYEI…FKVF, and MFTY…LASF.

This sequence belongs to the UbiA prenyltransferase family. Protoheme IX farnesyltransferase subfamily.

The protein resides in the cell inner membrane. The catalysed reaction is heme b + (2E,6E)-farnesyl diphosphate + H2O = Fe(II)-heme o + diphosphate. Its pathway is porphyrin-containing compound metabolism; heme O biosynthesis; heme O from protoheme: step 1/1. In terms of biological role, converts heme B (protoheme IX) to heme O by substitution of the vinyl group on carbon 2 of heme B porphyrin ring with a hydroxyethyl farnesyl side group. The sequence is that of Protoheme IX farnesyltransferase from Ehrlichia canis (strain Jake).